The sequence spans 147 residues: Large ribosomal subunit protein uL15 (147 aa).

The interval 1 to 46 (MSIRLENLSYTPGARKEKHRKGRGHAAGKGKQAGRGQSGQKKRSTV) is disordered. A compositionally biased stretch (basic residues) spans 16 to 28 (KEKHRKGRGHAAG).

Belongs to the universal ribosomal protein uL15 family. In terms of assembly, part of the 50S ribosomal subunit.

Functionally, binds to the 23S rRNA. The protein is Large ribosomal subunit protein uL15 of Mesomycoplasma hyopneumoniae (strain 7448) (Mycoplasma hyopneumoniae).